A 939-amino-acid polypeptide reads, in one-letter code: MKDYKTTLNLPKTNFSMKGNLSKKEPFILKKWNDNNIYSLIKKQNIGKKKFFLNDGPPYANGNIHIGHAINKILKDIVIKFKTLSGFDTYYTPSWDCHGLPIEHKVEKTIKKENILITKKEFRIKCRNYAQSQVNNQKLEFIRLGVFGDWENSYLTMNFKNEANIARTLMKMFKYGYVYQDFKPVHWCINCKSALAEAEVEYHNKLSNSIIIKFKLAHNINFWNQIFKNDHNQDIHLVVWTTTPWTLPASQAIALNPNFKYQLIQTNNNLFIISEKSVPDTMNKMGIQKWKKIHIFLGKNISNLKVIHPFLNTTIPVILADHVTQELGTGIVHTAPEFGQDDYYACKKNNINFTPTIDKKGHFLNNIHPKLNNINIFKSIKIVIKLLNNNNALLHSEKLVHSYPYCWRHKTPIISRATQQWFININHNNLRNRCIKYIQEVKWIPHWSKNRMIEMIINRPDWCISRQRTWGVPIPIFIHRKTGKLHPDTIKLSQKIIQNIETNGIQAWFDITEKSFLGELFKQYKKVTDVIDVWFESGSIQLSNIYNKIQHQHNNISDLYIEGLDQHRGWFMSSLIISAAISNQTPYKKVITHGFVVDKNKKKMSKSIGNTVHPSEVINTLGSDILRLWTASTNYSKEMSISQETLIHISDYYRRIRNTARFLLANLHEFNPENDLINAKNMIILDKWAIGKALHIQKKIIKSYKNYNFHDVIKYLMNFCSLDMGTFYLEIIKDRQYTTQKNSIARRSCQTAMYLILTAFVKWITPILPFTSDELWEYIPGTNKNKFVFLELWSNQLFDLNHKDTMNHEYWNQLLIIKTEVNKALEHARQNKIIRKSLEAHMTLYVNETIKCNLKLLNKELKFLFITSKVEIKNFYEAPKDAFQSETITNFKTIIKKMNGIKCPRCWHIITKIKNNKNHEICKRCILNTIGPGELRQFL.

The 'HIGH' region signature appears at 58–68 (PYANGNIHIGH). E562 contacts L-isoleucyl-5'-AMP. The short motif at 603–607 (KMSKS) is the 'KMSKS' region element. K606 provides a ligand contact to ATP. Zn(2+) is bound by residues C903, C906, C922, and C925.

The protein belongs to the class-I aminoacyl-tRNA synthetase family. IleS type 1 subfamily. As to quaternary structure, monomer. The cofactor is Zn(2+).

Its subcellular location is the cytoplasm. The catalysed reaction is tRNA(Ile) + L-isoleucine + ATP = L-isoleucyl-tRNA(Ile) + AMP + diphosphate. Functionally, catalyzes the attachment of isoleucine to tRNA(Ile). As IleRS can inadvertently accommodate and process structurally similar amino acids such as valine, to avoid such errors it has two additional distinct tRNA(Ile)-dependent editing activities. One activity is designated as 'pretransfer' editing and involves the hydrolysis of activated Val-AMP. The other activity is designated 'posttransfer' editing and involves deacylation of mischarged Val-tRNA(Ile). In Buchnera aphidicola subsp. Baizongia pistaciae (strain Bp), this protein is Isoleucine--tRNA ligase.